We begin with the raw amino-acid sequence, 114 residues long: As-peptide 126 (114 aa).

The first 22 residues, 1–22 (MSRALICSLALLAMLVISGTYA), serve as a signal peptide directing secretion. Repeat copies occupy residues 22 to 29 (ASPAANAE), 30 to 37 (ALAAANAE), 38 to 45 (ASAAANAE), 46 to 53 (PLAAANAE), 54 to 61 (PLAAANAE), 62 to 69 (PLAAANAD), 70 to 77 (PIAAANAE), 78 to 85 (PSAAANAE), and 86 to 93 (PLAAANAE). Positions 22 to 93 (ASPAANAEAL…AEPLAAANAE (72 aa)) are 9 X 8 AA approximate tandem repeats of [AP]-[ILS]-[AP]-A-A-N-A-[DE]. The propeptide occupies 23-104 (SPAANAEALA…SAGPSPLAAA (82 aa)). Residues 82–96 (ANAEPLAAANAEPSA) are compositionally biased toward low complexity. The segment at 82 to 114 (ANAEPLAAANAEPSAGPSPLAAAQDPPVVKMKG) is disordered. The residue at position 105 (glutamine 105) is a Pyrrolidone carboxylic acid. Lysine 113 carries the lysine amide modification.

In terms of tissue distribution, expressed by the venom gland.

Its subcellular location is the secreted. The chain is As-peptide 126 from Anoplius samariensis (Solitary wasp).